A 451-amino-acid chain; its full sequence is Secreted RxLR effector protein 70 (451 aa).

An N-terminal signal peptide occupies residues 1–17 (MRGAYYIITALLVVASS). The RxLR-dEER motif lies at 48–65 (RFLRESRDVHDDLANEER). Residues 303 to 336 (DAPSNSKHTLGGNKDSSSATTLHKHSKGLSSRPF) are disordered. The span at 305-323 (PSNSKHTLGGNKDSSSATT) shows a compositional bias: polar residues.

It belongs to the RxLR effector family.

The protein localises to the secreted. The protein resides in the host nucleus. Its function is as follows. Secreted effector that completely suppresses the host cell death induced by cell death-inducing proteins. This is Secreted RxLR effector protein 70 from Plasmopara viticola (Downy mildew of grapevine).